Reading from the N-terminus, the 307-residue chain is MTPVPVSVDTTADFAAPPTKTAPSTSTRTLLLAPPSIAAHEEKLRDIFATFDRASTDLQMLDRLSAGFVSLPAATYDLVLVLTDTDSARRAEALQLLSRDVYSALVPSMKGGAKLQLQDGTWNSAEGLEAILAGLVEKDGAFEKPAYQEAAVPLRLGGKKKKAPAPTEQPPVATGVGFVDGNDELIDEDDLLSDDDLKRPMQQPANCQPEKAKKRRRPCKDCTCGLAAEMEAEDKARQEKADKDLNVLKLQSTDLSDEVDFTVQGKTSSCNSCSLGDAFRCSSCPYIGLPPFKPGEEVKILNNMVQL.

2 disordered regions span residues 1–26 and 159–179; these read MTPVPVSVDTTADFAAPPTKTAPSTS and KKKKAPAPTEQPPVATGVGFV. Residues 15–26 are compositionally biased toward low complexity; it reads AAPPTKTAPSTS. The segment at 23-152 is N-terminal SAM-like domain; sequence PSTSTRTLLL…EKPAYQEAAV (130 aa). Residues 153–197 form a linker region; the sequence is PLRLGGKKKKAPAPTEQPPVATGVGFVDGNDELIDEDDLLSDDDL. [2Fe-2S] cluster-binding residues include cysteine 207, cysteine 219, cysteine 222, and cysteine 224. A fe-S binding site A region spans residues 207–224; the sequence is CQPEKAKKRRRPCKDCTC. [4Fe-4S] cluster-binding residues include cysteine 270, cysteine 273, cysteine 281, and cysteine 284. 2 short sequence motifs (cx2C motif) span residues 270–273 and 281–284; these read CNSC and CSSC. Residues 270–284 are fe-S binding site B; sequence CNSCSLGDAFRCSSC.

The protein belongs to the anamorsin family. In terms of assembly, monomer. Interacts with tah18. Interacts with mia40. [2Fe-2S] cluster serves as cofactor. It depends on [4Fe-4S] cluster as a cofactor.

It localises to the cytoplasm. The protein localises to the mitochondrion intermembrane space. Its function is as follows. Component of the cytosolic iron-sulfur (Fe-S) protein assembly (CIA) machinery required for the maturation of extramitochondrial Fe-S proteins. Part of an electron transfer chain functioning in an early step of cytosolic Fe-S biogenesis, facilitating the de novo assembly of a [4Fe-4S] cluster on the scaffold complex cfd1-nbp35. Electrons are transferred to dre2 from NADPH via the FAD- and FMN-containing protein tah18. Tah18-dre2 are also required for the assembly of the diferric tyrosyl radical cofactor of ribonucleotide reductase (RNR), probably by providing electrons for reduction during radical cofactor maturation in the catalytic small subunit rnr2. This is Fe-S cluster assembly protein dre2 from Aspergillus terreus (strain NIH 2624 / FGSC A1156).